Reading from the N-terminus, the 226-residue chain is DNA mismatch repair protein MutH (226 aa).

The protein belongs to the MutH family.

The protein resides in the cytoplasm. Sequence-specific endonuclease that cleaves unmethylated GATC sequences. It is involved in DNA mismatch repair. This Vibrio campbellii (strain ATCC BAA-1116) protein is DNA mismatch repair protein MutH.